Reading from the N-terminus, the 177-residue chain is Large ribosomal subunit protein uL6 (177 aa).

Belongs to the universal ribosomal protein uL6 family. As to quaternary structure, part of the 50S ribosomal subunit.

This protein binds to the 23S rRNA, and is important in its secondary structure. It is located near the subunit interface in the base of the L7/L12 stalk, and near the tRNA binding site of the peptidyltransferase center. In Polaromonas naphthalenivorans (strain CJ2), this protein is Large ribosomal subunit protein uL6.